We begin with the raw amino-acid sequence, 324 residues long: 7,8-didemethyl-8-hydroxy-5-deazariboflavin synthase (324 aa).

Positions 4–239 (VTYSKNVFIP…QEVAIQIPPN (236 aa)) constitute a Radical SAM core domain. Residues cysteine 18, cysteine 22, and cysteine 25 each contribute to the [4Fe-4S] cluster site.

This sequence belongs to the radical SAM superfamily. CofG family. Consists of two subunits, CofG and CofH. [4Fe-4S] cluster is required as a cofactor.

It catalyses the reaction 5-amino-5-(4-hydroxybenzyl)-6-(D-ribitylimino)-5,6-dihydrouracil + S-adenosyl-L-methionine = 7,8-didemethyl-8-hydroxy-5-deazariboflavin + 5'-deoxyadenosine + L-methionine + NH4(+) + H(+). It participates in cofactor biosynthesis; coenzyme F0 biosynthesis. Catalyzes the radical-mediated synthesis of 7,8-didemethyl-8-hydroxy-5-deazariboflavin from 5-amino-5-(4-hydroxybenzyl)-6-(D-ribitylimino)-5,6-dihydrouracil. This is 7,8-didemethyl-8-hydroxy-5-deazariboflavin synthase from Archaeoglobus fulgidus (strain ATCC 49558 / DSM 4304 / JCM 9628 / NBRC 100126 / VC-16).